The following is a 285-amino-acid chain: Complex I assembly factor TIMMDC1, mitochondrial (285 aa).

The next 4 helical transmembrane spans lie at 80-100 (AAVS…FIYA), 137-159 (RWSW…LTVY), 165-185 (MSHF…NLGV), and 188-208 (LVAG…LLMA). The segment at 265 to 285 (RIEELLSLPRNPSSPHQQSKH) is disordered. Positions 274-285 (RNPSSPHQQSKH) are enriched in polar residues. Phosphoserine is present on serine 277.

The protein belongs to the Tim17/Tim22/Tim23 family. Associates with the intermediate 315 kDa subcomplex of incompletely assembled complex I. Interacts with TMEM70.

Its subcellular location is the mitochondrion membrane. Its function is as follows. Chaperone protein involved in the assembly of the mitochondrial NADH:ubiquinone oxidoreductase complex (complex I). Participates in constructing the membrane arm of complex I. The chain is Complex I assembly factor TIMMDC1, mitochondrial from Mus musculus (Mouse).